An 88-amino-acid chain; its full sequence is Small ribosomal subunit protein uS17 (88 aa).

It belongs to the universal ribosomal protein uS17 family. In terms of assembly, part of the 30S ribosomal subunit.

One of the primary rRNA binding proteins, it binds specifically to the 5'-end of 16S ribosomal RNA. The protein is Small ribosomal subunit protein uS17 of Hahella chejuensis (strain KCTC 2396).